Reading from the N-terminus, the 1489-residue chain is ZEB2-regulated ABC transporter 1 (1489 aa).

The disordered stretch occupies residues Met-1–Glu-55. An N-linked (GlcNAc...) asparagine glycan is attached at Asn-7. Residues Ser-44–Gln-53 show a composition bias toward acidic residues. N-linked (GlcNAc...) asparagine glycans are attached at residues Asn-70, Asn-73, Asn-118, Asn-332, and Asn-469. The ABC transporter 1 domain maps to Leu-152–Asp-408. Transmembrane regions (helical) follow at residues Leu-513 to Ile-533, Gly-552 to Thr-572, Ile-599 to Phe-619, Gly-628 to Phe-648, and Met-662 to Val-682. Asn-714 carries N-linked (GlcNAc...) asparagine glycosylation. A helical membrane pass occupies residues Gly-773–Ile-793. The disordered stretch occupies residues Pro-811–Asn-834. Residues Glu-819–Asn-834 show a composition bias toward polar residues. Positions Phe-846–Gly-1088 constitute an ABC transporter 2 domain. Residue Gly-882–Thr-889 participates in ATP binding. Helical transmembrane passes span Ala-1190 to Leu-1210, Phe-1218 to Phe-1238, Ile-1269 to Phe-1289, Trp-1307 to Ile-1327, and Ala-1333 to Ala-1353. Residue Asn-1402 is glycosylated (N-linked (GlcNAc...) asparagine). Residues Gly-1457–Ile-1477 traverse the membrane as a helical segment.

This sequence belongs to the ABC transporter superfamily. ABCG family. PDR (TC 3.A.1.205) subfamily.

It is found in the cell membrane. Its subcellular location is the vacuole membrane. In terms of biological role, ABC transporter involved in zearalenone production. The protein is ZEB2-regulated ABC transporter 1 of Gibberella zeae (strain ATCC MYA-4620 / CBS 123657 / FGSC 9075 / NRRL 31084 / PH-1) (Wheat head blight fungus).